A 234-amino-acid polypeptide reads, in one-letter code: Sugar fermentation stimulation protein A (234 aa).

Residues 201-220 (LLSEAQNKGVEVLAYKAELS) constitute a DNA-binding region (H-T-H motif).

This sequence belongs to the SfsA family.

Its function is as follows. Binds to DNA non-specifically. Could be a regulatory factor involved in maltose metabolism. The polypeptide is Sugar fermentation stimulation protein A (Salmonella choleraesuis (strain SC-B67)).